Consider the following 479-residue polypeptide: Monodictyphenone cluster transcriptional coactivator mdpA (479 aa).

Residues 77-147 enclose the HTH iclR-type domain; it reads LAVQNQLLAC…DPGQVAHSAL (71 aa). Positions 107–126 form a DNA-binding region, H-T-H motif; that stretch reads IKDVAELAGVPETHLSRIIR. Disordered regions lie at residues 281–305 and 314–333; these read GPTA…HKHD and TAST…TTNS. Positions 289-298 are enriched in pro residues; it reads HPNPIRPPTP. Residues 314-323 show a composition bias toward low complexity; sequence TASTTPASSH.

Its subcellular location is the nucleus. Functionally, transcriptional coactivator; part of the gene cluster that mediates the biosynthesis of monodictyphenone, a prenyl xanthone derivative. With mdpE, coregulates the production of monodictyphenone. This chain is Monodictyphenone cluster transcriptional coactivator mdpA, found in Emericella nidulans (strain FGSC A4 / ATCC 38163 / CBS 112.46 / NRRL 194 / M139) (Aspergillus nidulans).